Reading from the N-terminus, the 156-residue chain is Small ribosomal subunit protein uS7 (156 aa).

The protein belongs to the universal ribosomal protein uS7 family. Part of the 30S ribosomal subunit. Contacts proteins S9 and S11.

Its function is as follows. One of the primary rRNA binding proteins, it binds directly to 16S rRNA where it nucleates assembly of the head domain of the 30S subunit. Is located at the subunit interface close to the decoding center, probably blocks exit of the E-site tRNA. This chain is Small ribosomal subunit protein uS7, found in Pseudoalteromonas translucida (strain TAC 125).